The chain runs to 155 residues: D-aminoacyl-tRNA deacylase (155 aa).

The Gly-cisPro motif, important for rejection of L-amino acids signature appears at 137–138; it reads GP.

This sequence belongs to the DTD family. Homodimer.

It localises to the cytoplasm. The enzyme catalyses glycyl-tRNA(Ala) + H2O = tRNA(Ala) + glycine + H(+). The catalysed reaction is a D-aminoacyl-tRNA + H2O = a tRNA + a D-alpha-amino acid + H(+). An aminoacyl-tRNA editing enzyme that deacylates mischarged D-aminoacyl-tRNAs. Also deacylates mischarged glycyl-tRNA(Ala), protecting cells against glycine mischarging by AlaRS. Acts via tRNA-based rather than protein-based catalysis; rejects L-amino acids rather than detecting D-amino acids in the active site. By recycling D-aminoacyl-tRNA to D-amino acids and free tRNA molecules, this enzyme counteracts the toxicity associated with the formation of D-aminoacyl-tRNA entities in vivo and helps enforce protein L-homochirality. The polypeptide is D-aminoacyl-tRNA deacylase (Geotalea uraniireducens (strain Rf4) (Geobacter uraniireducens)).